We begin with the raw amino-acid sequence, 385 residues long: G2/mitotic-specific cyclin-B3 (385 aa).

A compositionally biased stretch (polar residues) spans 1 to 16; sequence MMLRSQAKNVDLTSQA. Disordered stretches follow at residues 1–48 and 63–88; these read MMLR…HSKG and SAKR…QKSR. Basic and acidic residues-rich tracts occupy residues 17–28 and 63–80; these read DSRHQQKRKQAE and SAKR…RDVE.

Belongs to the cyclin family. Cyclin AB subfamily.

Its subcellular location is the nucleus. Functionally, could be involved at the G2/M (mitosis) transition. Interacts with the CDK1 and CDK2 protein kinases. G2/M cyclins accumulate steadily during G2 and are abruptly destroyed at mitosis. Plays a role during oocyte meiosis II. This chain is G2/mitotic-specific cyclin-B3 (cyb-3), found in Caenorhabditis elegans.